The following is a 904-amino-acid chain: Protein translocase subunit SecA (904 aa).

ATP is bound by residues Q89, 107 to 111, and D502; that span reads GEGKT. Zn(2+)-binding residues include C886, C888, C897, and H898.

Belongs to the SecA family. Monomer and homodimer. Part of the essential Sec protein translocation apparatus which comprises SecA, SecYEG and auxiliary proteins SecDF-YajC and YidC. Zn(2+) is required as a cofactor.

The protein localises to the cell inner membrane. Its subcellular location is the cytoplasm. It carries out the reaction ATP + H2O + cellular proteinSide 1 = ADP + phosphate + cellular proteinSide 2.. Functionally, part of the Sec protein translocase complex. Interacts with the SecYEG preprotein conducting channel. Has a central role in coupling the hydrolysis of ATP to the transfer of proteins into and across the cell membrane, serving both as a receptor for the preprotein-SecB complex and as an ATP-driven molecular motor driving the stepwise translocation of polypeptide chains across the membrane. The polypeptide is Protein translocase subunit SecA (Rhizobium etli (strain CIAT 652)).